The sequence spans 601 residues: Arginine--tRNA ligase (601 aa).

The short motif at 133-143 (PNTNKPLHLGH) is the 'HIGH' region element.

It belongs to the class-I aminoacyl-tRNA synthetase family. As to quaternary structure, monomer.

The protein localises to the cytoplasm. It catalyses the reaction tRNA(Arg) + L-arginine + ATP = L-arginyl-tRNA(Arg) + AMP + diphosphate. The sequence is that of Arginine--tRNA ligase from Flavobacterium psychrophilum (strain ATCC 49511 / DSM 21280 / CIP 103535 / JIP02/86).